A 945-amino-acid polypeptide reads, in one-letter code: Argonaute protein wago-1 (945 aa).

The span at 1–20 (MSPHPPQPHPPMPPMPPVTA) shows a compositional bias: pro residues. The disordered stretch occupies residues 1 to 41 (MSPHPPQPHPPMPPMPPVTAPPGAMTPMPPVPADAQKLHQS). Residues 322-432 (TVIQKLFDIT…FPAELMTVSR (111 aa)) form the PAZ domain. The 264-residue stretch at 636-899 (VKDGKRLTLE…PLYVANEYAK (264 aa)) folds into the Piwi domain.

It belongs to the Argonaute family. WAGO subfamily. As to quaternary structure, interacts with rde-12. Interacts with znfx-1. In terms of tissue distribution, enriched in sperm and oocytes.

The protein resides in the cytoplasmic granule. In terms of biological role, argonaute protein which is involved in the endogenous small interfering RNA (endo-siRNA) pathway. Interacts with secondary 22G-RNAs, which are RNA-dependent RNA polymerase-derived endo-siRNAs, typically 22 nucleotides in length with a 5'guanosine residue. In the germline, functions in a genome surveillance system to silence transposons and aberrant transcripts. This chain is Argonaute protein wago-1, found in Caenorhabditis elegans.